Here is a 355-residue protein sequence, read N- to C-terminus: MSVNYAAGLSPYADKGKCGLPEIFDPPEELERKVWELARLVWQSSSVVFHTGAGISTASGIPDFRGPHGVWTMEERGLAPKFDTTFESARPTQTHMALVQLERVGLLRFLVSQNVDGLHVRSGFPRDKLAELHGNMFVEECAKCKTQYVRDTVVGTMGLKATGRLCTVAKARGLRACRGELRDTILDWEDSLPDRDLALADEASRNADLSITLGTSLQIRPSGNLPLATKRRGGRLVIVNLQPTKHDRHADLRIHGYVDEVMTRLMKHLGLEIPAWDGPRVLERALPPLPRPPTPKLEPKEESPTRINGSIPAGPKQEPCAQHNGSEPASPKRERPTSPAPHRPPKRVKAKAVPS.

Serine 2 bears the N-acetylserine mark. The residue at position 10 (serine 10) is a Phosphoserine; by MAPK8. Positions 27–272 (PEELERKVWE…TRLMKHLGLE (246 aa)) constitute a Deacetylase sirtuin-type domain. Residue lysine 33 is modified to N6-acetyllysine. NAD(+)-binding residues include alanine 53, threonine 57, phenylalanine 64, arginine 65, tryptophan 71, glutamine 113, and histidine 133. The active-site Proton acceptor is the histidine 133. 3 residues coordinate Zn(2+): cysteine 141, cysteine 144, and cysteine 166. Lysine 170 participates in a covalent cross-link: Glycyl lysine isopeptide (Lys-Gly) (interchain with G-Cter in ubiquitin). Residue cysteine 177 participates in Zn(2+) binding. The NAD(+) site is built by glycine 214, serine 216, asparagine 240, glutamine 242, and valine 258. A disordered region spans residues 284-355 (RALPPLPRPP…KRVKAKAVPS (72 aa)). Residues 287-296 (PPLPRPPTPK) are compositionally biased toward pro residues. Threonine 294 is modified (phosphothreonine). Serine 303 and serine 330 each carry phosphoserine. Residues 343-355 (RPPKRVKAKAVPS) show a composition bias toward basic residues.

Belongs to the sirtuin family. Class IV subfamily. Homodimer; binds to nucleosomes and DNA ends as a homodimer. Interacts with RELA; interferes with RELA binding to target DNA. Interacts with SMARCA5; promoting recruitment of SMARCA5/SNF2H to double-strand breaks (DSBs) sites. Interacts with the mTORC2 complex; preventing the ability of SIRT6 to deacetylate FOXO1. Interacts with the CLOCK-BMAL1 complex; recruited by the CLOCK-BMAL1 complex to regulate expression of clock-controlled genes. Interacts with CSNK2A2; preventing CSNK2A2 localization to the nucleus. In terms of assembly, (Microbial infection) Interacts with Kaposi's sarcoma-associated herpesvirus protein VIRF-1; this interaction prevents SIRT6 deubiquitination by USP10. It depends on Zn(2+) as a cofactor. Acetylated at Lys-33. Deacetylation at Lys-33 by SIRT1 promotes homomultimerization and binding to double-strand breaks (DSBs) sites. In terms of processing, phosphorylation at Ser-10 by MAPK8/JNK1 in response to oxidative stress stimulates the mono-ADP-ribosyltransferase activity on PARP1, leading to PARP1 recruitment to double-strand breaks (DSBs). Post-translationally, monoubiquitinated at Lys-170 by STUB1/CHIP, preventing its degradation by the proteasome. Deubiquitinated by USP10, also preventing its degradation by the proteasome. Sumoylated, leading to specifically decrease ability to deacetylate histone H3 at 'Lys-56' (H3K56ac).

The protein localises to the nucleus. It is found in the chromosome. It localises to the telomere. The protein resides in the endoplasmic reticulum. It carries out the reaction N(6)-acetyl-L-lysyl-[protein] + NAD(+) + H2O = 2''-O-acetyl-ADP-D-ribose + nicotinamide + L-lysyl-[protein]. The catalysed reaction is N(6)-tetradecanoyl-L-lysyl-[protein] + NAD(+) + H2O = 2''-O-tetradecanoyl-ADP-D-ribose + nicotinamide + L-lysyl-[protein]. It catalyses the reaction N(6)-hexadecanoyl-L-lysyl-[protein] + NAD(+) + H2O = 2''-O-hexadecanoyl-ADP-D-ribose + nicotinamide + L-lysyl-[protein]. The enzyme catalyses L-lysyl-[protein] + NAD(+) = N(6)-(ADP-D-ribosyl)-L-lysyl-[protein] + nicotinamide + H(+). It carries out the reaction L-arginyl-[protein] + NAD(+) = N(omega)-(ADP-D-ribosyl)-L-arginyl-[protein] + nicotinamide + H(+). Compared to the defatty-acylase activity, the protein deacetylase activity is weak in vitro, and requires activation. The histone deacetylase activity is strongly activated upon binding to nucleosomes and chromatin in vivo. Two molecules of SIRT6 associate with the acidic patch of one nucleosome, while the C-terminal disordered region of SIRT6 associates with nucleosomal DNA, leading to efficient histone deacetylation. The protein-lysine deacetylase activity is also activated by long-chain free fatty-acids. The histone deacetylase activity is specifically repressed by long non-coding RNA lncPRESS1, which binds to SIRT6 and prevents chromatin-binding, thereby promoting stem cell pluripotency. Due to its essential role as tumor suppressor and involvement in DNA repair and life span, extensive research is made for the identification of small compound regulators of SIRT6. Nitro-fatty acids (nitro-oleic acid and nitro-conjugated linoleic acid) strongly stimulate the protein-lysine deacetylase activity by forming a covalent Michael adduct formation with Cys-18. Activated by UBCS039 (4-(pyridin-3-yl)-4,5- dihydropyrrolo[1,2-a]quinoxaline). Inhibited by non-selective hydroxamate trichostatin A inhibitor. Deacetylase activity is activated by fluvastatin and quercetin-based compounds. The protein-lysine deacetylase activity, but not the defatty-acylase activity, is specifically activated by MDL-800 and MDL-801 activators in vivo, enhancing the histone deacetylase and tumor suppressor activities. MDL-800 and MDL-801 selectively activate SIRT6 and not other members of the sirtuin family. The binding-mode of MDL-801 is however subject to discussion. In terms of biological role, NAD-dependent protein deacetylase, deacylase and mono-ADP-ribosyltransferase that plays an essential role in DNA damage repair, telomere maintenance, metabolic homeostasis, inflammation, tumorigenesis and aging. Displays protein-lysine deacetylase or defatty-acylase (demyristoylase and depalmitoylase) activity, depending on the context. Acts as a key histone deacetylase by catalyzing deacetylation of histone H3 at 'Lys-9', 'Lys-18' and 'Lys-56' (H3K9ac, H3K18ac and H3K56ac, respectively), suppressing target gene expression of several transcription factors, including NF-kappa-B. Acts as an inhibitor of transcription elongation by mediating deacetylation of H3K9ac and H3K56ac, preventing release of NELFE from chromatin and causing transcriptional pausing. Involved in DNA repair by promoting double-strand break (DSB) repair: acts as a DSB sensor by recognizing and binding DSB sites, leading to (1) recruitment of DNA repair proteins, such as SMARCA5/SNF2H, and (2) deacetylation of histone H3K9ac and H3K56ac. SIRT6 participation to DSB repair is probably involved in extension of life span. Also promotes DNA repair by deacetylating non-histone proteins, such as DDB2 and p53/TP53. Specifically deacetylates H3K18ac at pericentric heterochromatin, thereby maintaining pericentric heterochromatin silencing at centromeres and protecting against genomic instability and cellular senescence. Involved in telomere maintenance by catalyzing deacetylation of histone H3 in telomeric chromatin, regulating telomere position effect and telomere movement in response to DNA damage. Required for embryonic stem cell differentiation by mediating histone deacetylation of H3K9ac. Plays a major role in metabolism by regulating processes such as glycolysis, gluconeogenesis, insulin secretion and lipid metabolism. Inhibits glycolysis via histone deacetylase activity and by acting as a corepressor of the transcription factor HIF1A, thereby controlling the expression of multiple glycolytic genes. Has tumor suppressor activity by repressing glycolysis, thereby inhibiting the Warburg effect. Also regulates glycolysis and tumorigenesis by mediating deacetylation and nuclear export of non-histone proteins, such as isoform M2 of PKM (PKM2). Acts as a negative regulator of gluconeogenesis by mediating deacetylation of non-histone proteins, such as FOXO1 and KAT2A/GCN5. Promotes beta-oxidation of fatty acids during fasting by catalyzing deacetylation of NCOA2, inducing coactivation of PPARA. Acts as a regulator of lipid catabolism in brown adipocytes, both by catalyzing deacetylation of histones and non-histone proteins, such as FOXO1. Also acts as a regulator of circadian rhythms, both by regulating expression of clock-controlled genes involved in lipid and carbohydrate metabolism, and by catalyzing deacetylation of PER2. The defatty-acylase activity is specifically involved in regulation of protein secretion. Has high activity toward long-chain fatty acyl groups and mediates protein-lysine demyristoylation and depalmitoylation of target proteins, such as RRAS2 and TNF, thereby regulating their secretion. Also acts as a mono-ADP-ribosyltransferase by mediating mono-ADP-ribosylation of PARP1, TRIM28/KAP1 or SMARCC2/BAF170. Mono-ADP-ribosyltransferase activity is involved in DNA repair, cellular senescence, repression of LINE-1 retrotransposon elements and regulation of transcription. The chain is NAD-dependent protein deacylase sirtuin-6 from Homo sapiens (Human).